The primary structure comprises 406 residues: Cysteine desulfurase (406 aa).

At lysine 226 the chain carries N6-(pyridoxal phosphate)lysine. Cysteine 364 (cysteine persulfide intermediate) is an active-site residue.

It belongs to the class-V pyridoxal-phosphate-dependent aminotransferase family. Csd subfamily. Homodimer. Interacts with SufE and the SufBCD complex composed of SufB, SufC and SufD. The interaction with SufE is required to mediate the direct transfer of the sulfur atom from the S-sulfanylcysteine. The cofactor is pyridoxal 5'-phosphate.

It localises to the cytoplasm. The catalysed reaction is (sulfur carrier)-H + L-cysteine = (sulfur carrier)-SH + L-alanine. The enzyme catalyses L-selenocysteine + AH2 = hydrogenselenide + L-alanine + A + H(+). It functions in the pathway cofactor biosynthesis; iron-sulfur cluster biosynthesis. Functionally, cysteine desulfurases mobilize the sulfur from L-cysteine to yield L-alanine, an essential step in sulfur metabolism for biosynthesis of a variety of sulfur-containing biomolecules. Component of the suf operon, which is activated and required under specific conditions such as oxidative stress and iron limitation. Acts as a potent selenocysteine lyase in vitro, that mobilizes selenium from L-selenocysteine. Selenocysteine lyase activity is however unsure in vivo. The sequence is that of Cysteine desulfurase from Escherichia coli (strain K12 / MC4100 / BW2952).